The sequence spans 1081 residues: SPX and EXS domain-containing protein 4 (1081 aa).

In terms of domain architecture, SPX spans 1–483 (MKFRDLLNDH…RIISSECRKY (483 aa)). Disordered stretches follow at residues 86-118 (ETADSPAIPSPIISHSNINSNNNNNGGTNSVGF), 160-271 (QRNN…HDKN), and 318-354 (VKGDKSNDKNNDKSNDKNNNKNNKNNNNNNNLNDEDN). Composition is skewed to low complexity over residues 90–110 (SPAIPSPIISHSNINSNNNNN), 161–196 (RNNNNNINNINNNNNNNSNNSNNSNNNKTIKNTRNI), and 211–228 (SPFSSPSIGSPPMSSPSP). A compositionally biased stretch (acidic residues) spans 244–264 (KDEDEEEEGEEEEDIEMEQLE). Positions 319-336 (KGDKSNDKNNDKSNDKNN) are enriched in basic and acidic residues. Positions 337-349 (NKNNKNNNNNNNL) are enriched in low complexity. 9 helical membrane passes run 536-556 (NLFTIGLLIGVCIVLGIQVVF), 573-593 (LAWLLFRISLLPILLGTMFSL), 622-642 (YLKYGLIFNTLWLLALNLYID), 654-674 (ILIPIVFVLITLIIGIQPFPI), 703-723 (FFMSVQLLSLGEFLFNIQSMV), 776-796 (ITSAIRSIFSIIALVLNYIAL), 803-823 (WSIIKIAWFGINVVGSFYKFY), 854-874 (WIYYVAITLDFFLRFTWLIIF), and 887-907 (PLFLFFFSLTEVVWATQFIFF). The EXS domain maps to 738-940 (FCSQSRFFAL…SQEYNNYMDE (203 aa)). Positions 939 to 1031 (DEKKKRRKRK…INDHMNPDTG (93 aa)) are disordered. The segment covering 942 to 951 (KKRRKRKQKQ) has biased composition (basic residues). Positions 952–970 (SKSNNNNNNNNNNNNNNNN) are enriched in low complexity. The span at 977 to 1003 (SSNNVETDETITSSNNTDSSHQKQPLT) shows a compositional bias: polar residues. A compositionally biased stretch (basic and acidic residues) spans 1013 to 1022 (NHQDHHDLSI).

Belongs to the SYG1 (TC 2.A.94) family.

The protein localises to the membrane. The protein is SPX and EXS domain-containing protein 4 of Dictyostelium discoideum (Social amoeba).